We begin with the raw amino-acid sequence, 236 residues long: 7-cyano-7-deazaguanine synthase (236 aa).

7-17 (CSGGLDSVSLA) contributes to the ATP binding site. Residues Cys-185, Cys-193, Cys-196, and Cys-199 each coordinate Zn(2+).

This sequence belongs to the QueC family. Zn(2+) serves as cofactor.

It catalyses the reaction 7-carboxy-7-deazaguanine + NH4(+) + ATP = 7-cyano-7-deazaguanine + ADP + phosphate + H2O + H(+). The protein operates within purine metabolism; 7-cyano-7-deazaguanine biosynthesis. In terms of biological role, catalyzes the ATP-dependent conversion of 7-carboxy-7-deazaguanine (CDG) to 7-cyano-7-deazaguanine (preQ(0)). This Rhizobium rhizogenes (strain K84 / ATCC BAA-868) (Agrobacterium radiobacter) protein is 7-cyano-7-deazaguanine synthase.